A 349-amino-acid polypeptide reads, in one-letter code: Protein-arginine kinase (349 aa).

The Phosphagen kinase C-terminal domain occupies 24-252 (IVLSSRIRLA…SQIIEQERQA (229 aa)). ATP is bound by residues 27–31 (SSRIR), His-89, Arg-123, 174–178 (RASVM), and 205–210 (RGIYGE). The short motif at 335–340 (RDIKRA) is the RDXXRA motif of the pArg binding pocket involved in allosteric regulation element.

This sequence belongs to the ATP:guanido phosphotransferase family.

The catalysed reaction is L-arginyl-[protein] + ATP = N(omega)-phospho-L-arginyl-[protein] + ADP + H(+). With respect to regulation, appears to be allosterically activated by the binding of pArg-containing polypeptides to the pArg-binding pocket localized in the C-terminal domain of McsB. In terms of biological role, catalyzes the specific phosphorylation of arginine residues in proteins. This is Protein-arginine kinase from Halothermothrix orenii (strain H 168 / OCM 544 / DSM 9562).